Reading from the N-terminus, the 274-residue chain is 3-methyl-2-oxobutanoate hydroxymethyltransferase (274 aa).

Mg(2+) is bound by residues Asp-46 and Asp-85. 3-methyl-2-oxobutanoate contacts are provided by residues 46-47 (DS), Asp-85, and Lys-115. Glu-117 provides a ligand contact to Mg(2+). The active-site Proton acceptor is Glu-184.

It belongs to the PanB family. In terms of assembly, homodecamer; pentamer of dimers. Mg(2+) serves as cofactor.

It localises to the cytoplasm. It carries out the reaction 3-methyl-2-oxobutanoate + (6R)-5,10-methylene-5,6,7,8-tetrahydrofolate + H2O = 2-dehydropantoate + (6S)-5,6,7,8-tetrahydrofolate. The protein operates within cofactor biosynthesis; (R)-pantothenate biosynthesis; (R)-pantoate from 3-methyl-2-oxobutanoate: step 1/2. Its function is as follows. Catalyzes the reversible reaction in which hydroxymethyl group from 5,10-methylenetetrahydrofolate is transferred onto alpha-ketoisovalerate to form ketopantoate. This is 3-methyl-2-oxobutanoate hydroxymethyltransferase from Thermoanaerobacter pseudethanolicus (strain ATCC 33223 / 39E) (Clostridium thermohydrosulfuricum).